Consider the following 339-residue polypeptide: Dihydroorotate dehydrogenase (quinone) (339 aa).

FMN contacts are provided by residues 61 to 65 (AGLDK) and T85. Residue K65 participates in substrate binding. 110–114 (NRMGF) provides a ligand contact to substrate. The FMN site is built by N138 and N171. N171 contributes to the substrate binding site. Catalysis depends on S174, which acts as the Nucleophile. A substrate-binding site is contributed by N176. FMN is bound by residues K216 and T244. 245–246 (NT) contacts substrate. FMN contacts are provided by residues G267, G296, and 317–318 (YS).

The protein belongs to the dihydroorotate dehydrogenase family. Type 2 subfamily. As to quaternary structure, monomer. Requires FMN as cofactor.

Its subcellular location is the cell membrane. The enzyme catalyses (S)-dihydroorotate + a quinone = orotate + a quinol. It functions in the pathway pyrimidine metabolism; UMP biosynthesis via de novo pathway; orotate from (S)-dihydroorotate (quinone route): step 1/1. In terms of biological role, catalyzes the conversion of dihydroorotate to orotate with quinone as electron acceptor. This is Dihydroorotate dehydrogenase (quinone) from Pseudomonas fluorescens (strain ATCC BAA-477 / NRRL B-23932 / Pf-5).